The chain runs to 859 residues: Envelope glycoprotein (859 aa).

Positions 1–6 (MVSIAF) are excised as a propeptide. Over 7–614 (YGGIPGGIST…KDLWSHIGNW (608 aa)) the chain is Extracellular. N-linked (GlcNAc...) asparagine; by host glycosylation is found at Asn-40, Asn-112, Asn-141, Asn-148, Asn-186, Asn-214, Asn-233, Asn-244, Asn-340, Asn-368, Asn-399, Asn-406, Asn-411, and Asn-422. The segment at 446–466 (FGISAIVAAIVAATAIAASAT) is fusion peptide. N-linked (GlcNAc...) asparagine; by host glycosylation is found at Asn-483 and Asn-490. The interval 498–513 (LIERQIKILYAMILQT) is immunosuppression. Asn-550 and Asn-557 each carry an N-linked (GlcNAc...) asparagine; by host glycan. Coiled coils occupy residues 576–624 (ILTT…SIIK) and 663–699 (KKFH…YYKQ). A helical transmembrane segment spans residues 615–635 (IPGLGASIIKYIVMFLLIYLL). The Cytoplasmic segment spans residues 636-859 (LTSSPKILRA…TSHVSMPQYV (224 aa)). Positions 745–764 (AAINEHKNGSGGNNPHQGSL) are disordered.

The mature envelope protein (Env) consists of a trimer of SU-TM heterodimers attached by noncovalent interactions or by a labile interchain disulfide bond. Specific enzymatic cleavages in vivo yield mature proteins. Envelope glycoproteins are synthesized as an inactive precursor that is N-glycosylated and processed likely by host cell furin or by a furin-like protease in the Golgi to yield the mature SU and TM proteins. The cleavage site between SU and TM requires the minimal sequence [KR]-X-[KR]-R.

Its subcellular location is the virion membrane. It localises to the host cell membrane. In terms of biological role, the surface protein (SU) attaches the virus to the host cell by binding to its receptor. This interaction triggers the refolding of the transmembrane protein (TM) and is thought to activate its fusogenic potential by unmasking its fusion peptide. Fusion occurs at the host cell plasma membrane. Its function is as follows. The transmembrane protein (TM) acts as a class I viral fusion protein. Under the current model, the protein has at least 3 conformational states: pre-fusion native state, pre-hairpin intermediate state, and post-fusion hairpin state. During viral and target cell membrane fusion, the coiled coil regions (heptad repeats) assume a trimer-of-hairpins structure, positioning the fusion peptide in close proximity to the C-terminal region of the ectodomain. The formation of this structure appears to drive apposition and subsequent fusion of viral and target cell membranes. Membranes fusion leads to delivery of the nucleocapsid into the cytoplasm. In Equus asinus (Donkey), this protein is Envelope glycoprotein (env).